The chain runs to 30 residues: Trypsin inhibitor 1 (30 aa).

3 disulfide bridges follow: C4/C21, C11/C23, and C17/C29.

This sequence belongs to the protease inhibitor I7 (squash-type serine protease inhibitor) family.

The protein resides in the secreted. Inhibits trypsin. The sequence is that of Trypsin inhibitor 1 from Momordica charantia (Bitter gourd).